The chain runs to 91 residues: Acylphosphatase (91 aa).

The 86-residue stretch at 6 to 91 folds into the Acylphosphatase-like domain; that stretch reads CMRCYISGRV…WKDYISFDVL (86 aa). Residues Arg21 and Asn39 contribute to the active site.

The protein belongs to the acylphosphatase family.

The enzyme catalyses an acyl phosphate + H2O = a carboxylate + phosphate + H(+). The sequence is that of Acylphosphatase (acyP) from Legionella pneumophila (strain Paris).